Consider the following 380-residue polypeptide: Protein Wnt-5a (380 aa).

The signal sequence occupies residues 1-35; that stretch reads MKKSIGILSPGVALGTAGSAMSSKFFVMALAVFFS. A propeptide spanning residues 36 to 61 is cleaved from the precursor; the sequence is FAQVVIEANSWWSLGMNNPVQMSEVY. The cysteines at positions 104 and 115 are disulfide-linked. N-linked (GlcNAc...) asparagine glycosylation is found at asparagine 114 and asparagine 120. Intrachain disulfides connect cysteine 154/cysteine 162, cysteine 164/cysteine 182, cysteine 238/cysteine 252, cysteine 240/cysteine 247, cysteine 309/cysteine 340, cysteine 325/cysteine 335, cysteine 339/cysteine 379, cysteine 355/cysteine 370, cysteine 357/cysteine 367, and cysteine 362/cysteine 363. A lipid anchor (O-palmitoleoyl serine; by PORCN) is attached at serine 244. N-linked (GlcNAc...) asparagine glycans are attached at residues asparagine 312 and asparagine 326.

This sequence belongs to the Wnt family. In terms of assembly, forms a soluble 1:1 complex with AFM; this prevents oligomerization and is required for prolonged biological activity. The complex with AFM may represent the physiological form in body fluids. Homooligomer; disulfide-linked, leading to inactivation (in vitro). Interacts with PORCN. Interacts with WLS. Interacts with glypican GCP3. Interacts with PKD1 (via extracellular domain). Interacts with TMEM67. In terms of processing, glycosylation is necessary for secretion but not for activity. Palmitoleoylation is required for efficient binding to frizzled receptors. Depalmitoleoylation leads to Wnt signaling pathway inhibition. Post-translationally, proteolytic processing by TIKI1 and TIKI2 promotes oxidation and formation of large disulfide-bond oligomers, leading to inactivation of WNT5A.

It localises to the secreted. The protein resides in the extracellular space. It is found in the extracellular matrix. Its function is as follows. Ligand for members of the frizzled family of seven transmembrane receptors. Can activate or inhibit canonical Wnt signaling, depending on receptor context. In the presence of FZD4, activates beta-catenin signaling. In the presence of ROR2, inhibits the canonical Wnt pathway by promoting beta-catenin degradation through a GSK3-independent pathway which involves down-regulation of beta-catenin-induced reporter gene expression. Suppression of the canonical pathway allows chondrogenesis to occur. Inhibits tumor formation. Stimulates cell migration. Decreases proliferation, migration, invasiveness and clonogenicity of carcinoma cells and may act as a tumor suppressor. Mediates motility of melanoma cells. Required during embryogenesis for extension of the primary anterior-posterior axis and for outgrowth of limbs and the genital tubercle. Inhibits type II collagen expression in chondrocytes. This is Protein Wnt-5a from Oryctolagus cuniculus (Rabbit).